We begin with the raw amino-acid sequence, 53 residues long: uncharacterized protein (53 aa).

Its subcellular location is the plastid. The protein localises to the chloroplast. This is an uncharacterized protein from Guillardia theta (Cryptophyte).